A 688-amino-acid chain; its full sequence is Potassium-transporting ATPase ATP-binding subunit (688 aa).

The next 4 membrane-spanning stretches (helical) occupy residues 34-54, 62-82, 219-239, and 260-280; these read PVMF…LAIL, AMFT…ANMA, VALT…TATL, and VLVA…LSAI. Residue Asp313 is the 4-aspartylphosphate intermediate of the active site. ATP is bound by residues Asp350, Glu354, 383-390, and Lys401; that span reads FSAQTRMS. Mg(2+) contacts are provided by Asp524 and Asp528. Transmembrane regions (helical) follow at residues 594–614, 622–642, and 662–682; these read FAII…LNIM, AILS…PLAL, and IYGL…DLLL.

Belongs to the cation transport ATPase (P-type) (TC 3.A.3) family. Type IA subfamily. In terms of assembly, the system is composed of three essential subunits: KdpA, KdpB and KdpC.

Its subcellular location is the cell inner membrane. It carries out the reaction K(+)(out) + ATP + H2O = K(+)(in) + ADP + phosphate + H(+). Functionally, part of the high-affinity ATP-driven potassium transport (or Kdp) system, which catalyzes the hydrolysis of ATP coupled with the electrogenic transport of potassium into the cytoplasm. This subunit is responsible for energy coupling to the transport system and for the release of the potassium ions to the cytoplasm. The protein is Potassium-transporting ATPase ATP-binding subunit of Yersinia pseudotuberculosis serotype I (strain IP32953).